A 334-amino-acid polypeptide reads, in one-letter code: Nucleoid-associated protein PFL_1060 (334 aa).

This sequence belongs to the YejK family.

It is found in the cytoplasm. Its subcellular location is the nucleoid. This Pseudomonas fluorescens (strain ATCC BAA-477 / NRRL B-23932 / Pf-5) protein is Nucleoid-associated protein PFL_1060.